The chain runs to 162 residues: Caveolin-2 (162 aa).

Residues 1 to 86 (MGLETEKADV…FEISKYVIYK (86 aa)) lie on the Cytoplasmic side of the membrane. Phosphotyrosine; by SRC is present on Tyr19. Residues Ser20 and Ser23 each carry the phosphoserine modification. Tyr27 is subject to Phosphotyrosine; by SRC. An intramembrane region (helical) is located at residues 87–107 (FLTVFLAIPLAFVAGILFATL). The Cytoplasmic segment spans residues 108-162 (SCLHIWIIMPFVKTCLMLLPSVQTIWKSVTDVVIAPLCTSAGRSFSSVSLQLSHD).

It belongs to the caveolin family. Monomer or homodimer. Interacts with CAV1; the interaction forms a stable heterooligomeric complex that is required for targeting to lipid rafts and for caveolae formation. Tyrosine phosphorylated forms do not form heterooligomers with the Tyr-19-phosphorylated form existing as a monomer or dimer, and the Tyr-27-form as a monomer only. Interacts (tyrosine phosphorylated form) with the SH2 domain-containing proteins, RASA1, NCK1 and SRC. Interacts (tyrosine phosphorylated form) with INSR, the interaction (Tyr-27-phosphorylated form) is increased on insulin stimulation. Interacts (Tyr-19 phosphorylated form) with MAPK1 (phosphorylated form); the interaction, promoted by insulin, leads to nuclear location and MAPK1 activation. Interacts with STAT3; the interaction is increased on insulin-induced tyrosine phosphorylation leading to STAT activation. Post-translationally, phosphorylated on serine and tyrosine residues. CAV1 promotes phosphorylation on Ser-23 which then targets the complex to the plasma membrane, lipid rafts and caveolae. Phosphorylation on both Tyr-19 and Tyr-27 is required for insulin-induced 'Ser-727' phosphorylation of STAT3 and its activation. Phosphorylation on Tyr-19 is required for insulin-induced phosphorylation of MAPK1 and DNA binding of STAT3. Tyrosine phosphorylation is induced by both EGF and insulin.

It localises to the nucleus. The protein localises to the cytoplasm. It is found in the golgi apparatus membrane. The protein resides in the cell membrane. Its subcellular location is the membrane. It localises to the caveola. Functionally, may act as a scaffolding protein within caveolar membranes. Interacts directly with G-protein alpha subunits and can functionally regulate their activity. Acts as an accessory protein in conjunction with CAV1 in targeting to lipid rafts and driving caveolae formation. Positive regulator of cellular mitogenesis of the MAPK signaling pathway. Required for the insulin-stimulated nuclear translocation and activation of MAPK1 and STAT3, and the subsequent regulation of cell cycle progression. The protein is Caveolin-2 (CAV2) of Equus caballus (Horse).